We begin with the raw amino-acid sequence, 106 residues long: Small membrane A-kinase anchor protein (106 aa).

Glycine 2 carries N-myristoyl glycine lipidation. Cysteine 3 is lipidated: S-palmitoyl cysteine. Phosphoserine is present on serine 40. The PKA-RI-binding stretch occupies residues alanine 62 to cysteine 85. Serine 98 is subject to Phosphoserine.

This sequence belongs to the small membrane AKAP family. Interacts with PKA type I regulatory subunits PRKAR1A and PRKAR1B. Also binds to type II regulatory subunits, but at a tenfold lower affinity. Post-translationally, may be palmitoylated at Cys-3. Widely expressed, with very low levels in spleen and liver.

The protein resides in the cell membrane. In terms of biological role, binds to type I regulatory subunits of protein kinase A (PKA-RI) and may anchor/target them to the plasma membrane. The polypeptide is Small membrane A-kinase anchor protein (Mus musculus (Mouse)).